The following is a 358-amino-acid chain: Putative movement protein (358 aa).

Its function is as follows. Transports viral genome to neighboring plant cells directly through plasmosdesmata, without any budding. The movement protein allows efficient cell to cell propagation, by bypassing the host cell wall barrier (Potential). This chain is Putative movement protein, found in Raspberry bushy dwarf virus (isolate Malling Jewel raspberry/R15) (RBDV).